The following is a 602-amino-acid chain: Elongation factor 4 (602 aa).

Residues 7-189 enclose the tr-type G domain; it reads SQIRNFSIIA…AIVHRIPPPA (183 aa). Residues 19 to 24 and 136 to 139 each bind GTP; these read DHGKST and NKID.

This sequence belongs to the TRAFAC class translation factor GTPase superfamily. Classic translation factor GTPase family. LepA subfamily.

The protein localises to the cell inner membrane. The enzyme catalyses GTP + H2O = GDP + phosphate + H(+). Functionally, required for accurate and efficient protein synthesis under certain stress conditions. May act as a fidelity factor of the translation reaction, by catalyzing a one-codon backward translocation of tRNAs on improperly translocated ribosomes. Back-translocation proceeds from a post-translocation (POST) complex to a pre-translocation (PRE) complex, thus giving elongation factor G a second chance to translocate the tRNAs correctly. Binds to ribosomes in a GTP-dependent manner. This Gloeobacter violaceus (strain ATCC 29082 / PCC 7421) protein is Elongation factor 4.